A 628-amino-acid chain; its full sequence is Beta-galactosidase large subunit (628 aa).

Glu468 serves as the catalytic Proton donor. Glu536 acts as the Nucleophile in catalysis.

This sequence belongs to the glycosyl hydrolase 2 family. In terms of assembly, heterodimer of a large (LacL) and a small subunit (LacM).

It catalyses the reaction Hydrolysis of terminal non-reducing beta-D-galactose residues in beta-D-galactosides.. In terms of biological role, component of a beta-galactosidase. The polypeptide is Beta-galactosidase large subunit (Lactobacillus helveticus (Lactobacillus suntoryeus)).